A 308-amino-acid chain; its full sequence is Secreted frizzled-related protein 1 (308 aa).

An N-terminal signal peptide occupies residues 1 to 25 (MGGGRWAAAGALLALAAGLLAAGSA). One can recognise an FZ domain in the interval 47 to 163 (TKPPQCVDIP…FPEGDVCIAM (117 aa)). 5 cysteine pairs are disulfide-bonded: C52–C115, C62–C108, C99–C134, C123–C160, and C127–C151. The N-linked (GlcNAc...) asparagine glycan is linked to N167. 3 disulfides stabilise this stretch: C180–C250, C183–C252, and C197–C300. The NTR domain occupies 180–300 (CPPCDNELKS…FMKKMKNHEC (121 aa)).

It belongs to the secreted frizzled-related protein (sFRP) family. In terms of assembly, interacts with WNT1, WNT2, WNT4, WNT8, MYOC and FRZD6. In terms of tissue distribution, highest levels in aortic endothelium, heart, spleen and eye. Lower levels in lung, brain and kidney. Weak expression in liver, skeletal muscle and the medial layer of the aorta. In the cortical brain, localized to neurons and small blood vessels. In the retina, localized to the inner and outer nuclear layers with high expression in the neuronal cell bodies. In the heart, restricted to myocytes. In lung, highest expression found in the epithelium of terminal bronchioles. In kidney, localized to the epithelium of collecting ducts of the medulla and, in spleen, expression restricted to the red pulp in cells associated with the sinuses.

It is found in the secreted. Its function is as follows. Soluble frizzled-related proteins (sFRPS) function as modulators of Wnt signaling through direct interaction with Wnts. They have a role in regulating cell growth and differentiation in specific cell types. SFRP1 decreases intracellular beta-catenin levels. Has antiproliferative effects on vascular cells, in vitro and in vivo, and can induce, in vivo, an angiogenic response. In vascular cell cycle, delays the G1 phase and entry into the S phase. In kidney development, inhibits tubule formation and bud growth in metanephroi. Inhibits WNT1/WNT4-mediated TCF-dependent transcription. This is Secreted frizzled-related protein 1 (SFRP1) from Bos taurus (Bovine).